The following is a 130-amino-acid chain: Ornithine decarboxylase antizyme (130 aa).

The span at 1–14 (SDVPVHHRTDHDRA) shows a compositional bias: basic and acidic residues. Residues 1–56 (SDVPVHHRTDHDRASLLTGSSRKSSVDSAGGSLFEASSRASSPSSSSSSECSDTES) are disordered. The segment covering 17-27 (LTGSSRKSSVD) has biased composition (polar residues). Positions 32–51 (SLFEASSRASSPSSSSSSEC) are enriched in low complexity.

Belongs to the ODC antizyme family. In terms of assembly, interacts with ODC1 and thereby sterically blocks ODC homodimerization.

Its function is as follows. Ornithine decarboxylase (ODC) antizyme protein that negatively regulates ODC activity and intracellular polyamine biosynthesis and uptake in response to increased intracellular polyamine levels. Binds to ODC monomers, inhibiting the assembly of the functional ODC homodimer, and targets the monomers for ubiquitin-independent proteolytic destruction by the 26S proteasome. The polypeptide is Ornithine decarboxylase antizyme (Oda) (Drosophila virilis (Fruit fly)).